The sequence spans 453 residues: Signal transduction histidine-protein kinase ArlS (453 aa).

Helical transmembrane passes span 14-34 (ITTLIMFSTIILFCLVIIFFL) and 157-177 (FVAIAFGLLATFIMAGISYIF). Positions 179–232 (TQLTKPLVTMSNKMIQIRRDGFQNKLELKTNYEETDNLIDTFNDMMYQIEESFN) constitute an HAMP domain. The Histidine kinase domain occupies 240–453 (DASHELRTPL…QYTTFKIIFK (214 aa)). His-243 is modified (phosphohistidine; by autocatalysis).

Autophosphorylated.

It is found in the cell membrane. The enzyme catalyses ATP + protein L-histidine = ADP + protein N-phospho-L-histidine.. Member of the two-component regulatory system ArlS/ArlR. ArlS probably functions as a sensor protein kinase which is autophosphorylated at a histidine residue and transfers its phosphate group to ArlR. This is Signal transduction histidine-protein kinase ArlS (arlS) from Staphylococcus haemolyticus (strain JCSC1435).